The chain runs to 272 residues: Putative pyruvate, phosphate dikinase regulatory protein 2 (272 aa).

154-161 (GVSRTSKT) contacts ADP.

The protein belongs to the pyruvate, phosphate/water dikinase regulatory protein family. PDRP subfamily.

It catalyses the reaction N(tele)-phospho-L-histidyl/L-threonyl-[pyruvate, phosphate dikinase] + ADP = N(tele)-phospho-L-histidyl/O-phospho-L-threonyl-[pyruvate, phosphate dikinase] + AMP + H(+). The catalysed reaction is N(tele)-phospho-L-histidyl/O-phospho-L-threonyl-[pyruvate, phosphate dikinase] + phosphate + H(+) = N(tele)-phospho-L-histidyl/L-threonyl-[pyruvate, phosphate dikinase] + diphosphate. Its function is as follows. Bifunctional serine/threonine kinase and phosphorylase involved in the regulation of the pyruvate, phosphate dikinase (PPDK) by catalyzing its phosphorylation/dephosphorylation. In Staphylococcus epidermidis (strain ATCC 35984 / DSM 28319 / BCRC 17069 / CCUG 31568 / BM 3577 / RP62A), this protein is Putative pyruvate, phosphate dikinase regulatory protein 2.